The sequence spans 401 residues: Imidazolonepropionase (401 aa).

Residues histidine 66 and histidine 68 each coordinate Fe(3+). 2 residues coordinate Zn(2+): histidine 66 and histidine 68. Residues arginine 75, tyrosine 138, and histidine 171 each coordinate 4-imidazolone-5-propanoate. Position 138 (tyrosine 138) interacts with N-formimidoyl-L-glutamate. Histidine 236 contributes to the Fe(3+) binding site. Position 236 (histidine 236) interacts with Zn(2+). Glutamine 239 provides a ligand contact to 4-imidazolone-5-propanoate. Aspartate 311 is a binding site for Fe(3+). Zn(2+) is bound at residue aspartate 311. Asparagine 313 and glycine 315 together coordinate N-formimidoyl-L-glutamate. Threonine 316 is a 4-imidazolone-5-propanoate binding site.

Belongs to the metallo-dependent hydrolases superfamily. HutI family. Zn(2+) is required as a cofactor. Requires Fe(3+) as cofactor.

The protein resides in the cytoplasm. The enzyme catalyses 4-imidazolone-5-propanoate + H2O = N-formimidoyl-L-glutamate. Its pathway is amino-acid degradation; L-histidine degradation into L-glutamate; N-formimidoyl-L-glutamate from L-histidine: step 3/3. Catalyzes the hydrolytic cleavage of the carbon-nitrogen bond in imidazolone-5-propanoate to yield N-formimidoyl-L-glutamate. It is the third step in the universal histidine degradation pathway. This is Imidazolonepropionase from Pseudomonas putida (strain GB-1).